We begin with the raw amino-acid sequence, 296 residues long: 4-hydroxy-tetrahydrodipicolinate synthase (296 aa).

Pyruvate is bound at residue T50. Catalysis depends on Y138, which acts as the Proton donor/acceptor. Catalysis depends on K166, which acts as the Schiff-base intermediate with substrate. A pyruvate-binding site is contributed by I208.

The protein belongs to the DapA family. Homotetramer; dimer of dimers.

Its subcellular location is the cytoplasm. The catalysed reaction is L-aspartate 4-semialdehyde + pyruvate = (2S,4S)-4-hydroxy-2,3,4,5-tetrahydrodipicolinate + H2O + H(+). It participates in amino-acid biosynthesis; L-lysine biosynthesis via DAP pathway; (S)-tetrahydrodipicolinate from L-aspartate: step 3/4. Functionally, catalyzes the condensation of (S)-aspartate-beta-semialdehyde [(S)-ASA] and pyruvate to 4-hydroxy-tetrahydrodipicolinate (HTPA). The chain is 4-hydroxy-tetrahydrodipicolinate synthase from Ruthia magnifica subsp. Calyptogena magnifica.